We begin with the raw amino-acid sequence, 129 residues long: MSIEFDDSSRHNMNMTQLMQLGAFDRRSGDDFMVQDFKNGIRDCSGIPVNNRNLAFKAYDAVKQKYDSSIKVFNIQDITIKGATWQHHNCQSTGKWYSQLYDYQNTFIGKQEYNILFDCYSYLKYNLNG.

It is found in the cytoplasm. The protein localises to the cytosol. Its subcellular location is the nucleus. This is an uncharacterized protein from Schizosaccharomyces pombe (strain 972 / ATCC 24843) (Fission yeast).